The primary structure comprises 209 residues: Protein bli-3 (209 aa).

Positions 1-11 are enriched in polar residues; that stretch reads MSGQGFSNADT. The disordered stretch occupies residues 1–24; that stretch reads MSGQGFSNADTGNKPADPYKQANL.

The sequence is that of Protein bli-3 (bli-3) from Neurospora crassa (strain ATCC 24698 / 74-OR23-1A / CBS 708.71 / DSM 1257 / FGSC 987).